The chain runs to 343 residues: Glycerol-3-phosphate dehydrogenase [NAD(P)+] (343 aa).

Positions 11, 12, 32, 33, and 106 each coordinate NADPH. Residues lysine 106, glycine 136, and serine 138 each contribute to the sn-glycerol 3-phosphate site. Alanine 140 contacts NADPH. Lysine 192, aspartate 245, serine 255, arginine 256, and asparagine 257 together coordinate sn-glycerol 3-phosphate. The Proton acceptor role is filled by lysine 192. Arginine 256 is an NADPH binding site. Positions 280 and 282 each coordinate NADPH.

The protein belongs to the NAD-dependent glycerol-3-phosphate dehydrogenase family.

The protein localises to the cytoplasm. It carries out the reaction sn-glycerol 3-phosphate + NAD(+) = dihydroxyacetone phosphate + NADH + H(+). It catalyses the reaction sn-glycerol 3-phosphate + NADP(+) = dihydroxyacetone phosphate + NADPH + H(+). It participates in membrane lipid metabolism; glycerophospholipid metabolism. In terms of biological role, catalyzes the reduction of the glycolytic intermediate dihydroxyacetone phosphate (DHAP) to sn-glycerol 3-phosphate (G3P), the key precursor for phospholipid synthesis. The protein is Glycerol-3-phosphate dehydrogenase [NAD(P)+] of Geobacillus thermodenitrificans (strain NG80-2).